The chain runs to 193 residues: Transmembrane protein 066L (193 aa).

2 helical membrane passes run 14-34 (VLFA…GLVW) and 48-68 (LVVE…LVVV).

It belongs to the IIV-6 357R family.

The protein localises to the membrane. This is Transmembrane protein 066L from Invertebrate iridescent virus 3 (IIV-3).